We begin with the raw amino-acid sequence, 768 residues long: Phosphoribosylformylglycinamidine synthase subunit PurL (768 aa).

His53 is a catalytic residue. Tyr56 contributes to the ATP binding site. Mg(2+) is bound at residue Glu98. Substrate-binding positions include 99–102 (SHNH) and Arg121. The Proton acceptor role is filled by His100. A Mg(2+)-binding site is contributed by Asp122. Gln253 serves as a coordination point for substrate. Asp285 is a Mg(2+) binding site. Residue 328–330 (ETQ) participates in substrate binding. Residues Asp516 and Gly561 each coordinate ATP. Mg(2+) is bound at residue Asn562. Residue Ser564 coordinates substrate.

It belongs to the FGAMS family. Monomer. Part of the FGAM synthase complex composed of 1 PurL, 1 PurQ and 2 PurS subunits.

Its subcellular location is the cytoplasm. The catalysed reaction is N(2)-formyl-N(1)-(5-phospho-beta-D-ribosyl)glycinamide + L-glutamine + ATP + H2O = 2-formamido-N(1)-(5-O-phospho-beta-D-ribosyl)acetamidine + L-glutamate + ADP + phosphate + H(+). It functions in the pathway purine metabolism; IMP biosynthesis via de novo pathway; 5-amino-1-(5-phospho-D-ribosyl)imidazole from N(2)-formyl-N(1)-(5-phospho-D-ribosyl)glycinamide: step 1/2. Its function is as follows. Part of the phosphoribosylformylglycinamidine synthase complex involved in the purines biosynthetic pathway. Catalyzes the ATP-dependent conversion of formylglycinamide ribonucleotide (FGAR) and glutamine to yield formylglycinamidine ribonucleotide (FGAM) and glutamate. The FGAM synthase complex is composed of three subunits. PurQ produces an ammonia molecule by converting glutamine to glutamate. PurL transfers the ammonia molecule to FGAR to form FGAM in an ATP-dependent manner. PurS interacts with PurQ and PurL and is thought to assist in the transfer of the ammonia molecule from PurQ to PurL. This is Phosphoribosylformylglycinamidine synthase subunit PurL from Methanothrix thermoacetophila (strain DSM 6194 / JCM 14653 / NBRC 101360 / PT) (Methanosaeta thermophila).